A 201-amino-acid chain; its full sequence is Protein ripply1 (201 aa).

The segment at 1 to 29 is disordered; it reads MDPAASPAAAPPAAPAAAPAADPAADPAA. Low complexity predominate over residues 15 to 29; it reads PAAAPAADPAADPAA. A WRPW motif motif is present at residues 57–60; that stretch reads AYLW. A ripply homology domain region spans residues 99–134; it reads HPVRLYWPKSHSFDYLYSAGEILLNNFPVQATINLY. Positions 136–174 are enriched in acidic residues; that stretch reads DSDSADNEEDKEEEEEEEEEEDDEEEEEDEDKDVNENEP. A disordered region spans residues 136 to 201; the sequence is DSDSADNEED…SPDPHSACPN (66 aa).

The protein belongs to the ripply family. Expressed in the anterior presomitic mesoderm and somites of stage E9.5 dpc embryos. Also expressed in tongue, diaphragm and intercostal muscles at 16.5 dpc.

The protein resides in the nucleus. In terms of biological role, plays a role in somitogenesis. Essential for transcriptional repression of the segmental patterning genes, thus terminating the segmentation program in the presomitic mesoderm, and also required for the maintenance of rostrocaudal polarity in somites. The chain is Protein ripply1 from Mus musculus (Mouse).